The sequence spans 285 residues: uncharacterized protein (285 aa).

7 helical membrane passes run 6 to 26 (YLVV…TPLI), 38 to 58 (VFAA…YIFP), 84 to 104 (IFLL…IFLR), 110 to 130 (GVLA…ELIF), 153 to 173 (FMMH…DDGF), 176 to 196 (ISFF…ALMV), and 236 to 256 (LIFG…TVLV).

The protein resides in the cell membrane. This is an uncharacterized protein from Mycoplasma pneumoniae (strain ATCC 29342 / M129 / Subtype 1) (Mycoplasmoides pneumoniae).